A 372-amino-acid chain; its full sequence is MPNQHMLLLFNLLPVGSNISIWWNFGSMLLTCLALQTMTGFFLAIHYTANINLAFSSIVHITRDVPYGWMMQNLHAIGASMFFICIYIHIARGLYYGSFLNKNVWLSGTTLLIILMATAFFGYVLPWGQMSFWAATVITNLLTAVPYIGTELTNWLWGGFSINDPTLTRFFALHFILPFTIISMSSIHIMLLHTEGSSNPLGTNSDIDKIPFHPYHSHKDMLMFTIMITMLFIIMSFTPNIFNDPENFSKANPLVTPQHIKPEWYFLFAYGILRSIPNKLGGTVALVLSVTILLTMPFTHTSHMRSMTFRPLMQFMFWTLVATFITITWAATKPVEPPFTSIGQVTAILYFLFFTMNPLLGWLENKISMTNT.

4 helical membrane passes run 25 to 45, 69 to 90, 105 to 125, and 170 to 190; these read FGSM…FLAI, WMMQ…YIHI, WLSG…GYVL, and FFAL…IHIM. Residues His-75 and His-89 each coordinate heme b. Heme b contacts are provided by His-174 and His-188. His-193 is a binding site for a ubiquinone. The next 4 helical transmembrane spans lie at 218 to 238, 280 to 300, 312 to 332, and 339 to 358; these read HKDM…MSFT, LGGT…PFTH, LMQF…WAAT, and FTSI…TMNP.

It belongs to the cytochrome b family. As to quaternary structure, the cytochrome bc1 complex contains 3 respiratory subunits (MT-CYB, CYC1 and UQCRFS1), 2 core proteins (UQCRC1 and UQCRC2) and probably 6 low-molecular weight proteins. Heme b serves as cofactor.

The protein localises to the mitochondrion inner membrane. In terms of biological role, component of the ubiquinol-cytochrome c reductase complex (complex III or cytochrome b-c1 complex) that is part of the mitochondrial respiratory chain. The b-c1 complex mediates electron transfer from ubiquinol to cytochrome c. Contributes to the generation of a proton gradient across the mitochondrial membrane that is then used for ATP synthesis. In Pantherophis vulpinus (Western fox snake), this protein is Cytochrome b (MT-CYB).